Here is a 120-residue protein sequence, read N- to C-terminus: MREKKSIVSGNAHVIVTFNNVYISVTDHQGNVQGWASSGSVGFKGNKKSTAYAAQSVATTLMTKLKRIGLKILNVHLSGSNPIREAALRAIRNSGIVIISLQDMTPVPHNGVRLRRRRRV.

Belongs to the universal ribosomal protein uS11 family. As to quaternary structure, part of the 30S ribosomal subunit. Interacts with proteins S7 and S18. Binds to IF-3.

Located on the platform of the 30S subunit, it bridges several disparate RNA helices of the 16S rRNA. Forms part of the Shine-Dalgarno cleft in the 70S ribosome. The polypeptide is Small ribosomal subunit protein uS11 (Neorickettsia sennetsu (strain ATCC VR-367 / Miyayama) (Ehrlichia sennetsu)).